The primary structure comprises 279 residues: Putative phosphoenolpyruvate synthase regulatory protein (279 aa).

159-166 (GVSRSGKT) lines the ADP pocket.

The protein belongs to the pyruvate, phosphate/water dikinase regulatory protein family. PSRP subfamily.

It carries out the reaction [pyruvate, water dikinase] + ADP = [pyruvate, water dikinase]-phosphate + AMP + H(+). The catalysed reaction is [pyruvate, water dikinase]-phosphate + phosphate + H(+) = [pyruvate, water dikinase] + diphosphate. Its function is as follows. Bifunctional serine/threonine kinase and phosphorylase involved in the regulation of the phosphoenolpyruvate synthase (PEPS) by catalyzing its phosphorylation/dephosphorylation. In Ralstonia nicotianae (strain ATCC BAA-1114 / GMI1000) (Ralstonia solanacearum), this protein is Putative phosphoenolpyruvate synthase regulatory protein.